A 245-amino-acid chain; its full sequence is MHIVYDDVRDLKAIIQALLKLVDEALFDIKPEGIQLVAIDKAHISLIKIELPKEMFKEYDVPEEFKFGFNTQYMSKLLKAAKRKEEIIIDADSPEVVKLTLSGALNRVFNVNNIEVLPPEVPEVNLEFDIKATINASGLKNAIGEIAEVADTLLISGNEEKVVVKGEGENKVEVEFSKDTGSLADIEFNKESSSAYDVEYLNDIISLTKLSDYVKVAFADQKPMQLEFNMEGGGKVTYLLAPKLS.

It belongs to the PCNA family. In terms of assembly, the subunits circularize to form a toroid; DNA passes through its center. Replication factor C (RFC) is required to load the toroid on the DNA. Forms a dimeric complex with PCNA3 and a trimeric complex with PCNA2 and PCNA3; does not form homotrimers.

Sliding clamp subunit that acts as a moving platform for DNA processing. Responsible for tethering the catalytic subunit of DNA polymerase and other proteins to DNA during high-speed replication. The trimeric complex inhibits DNA ligase and both 3'-5' and 5'-3' activity of Hel308 (Hjm) helicase, but stimulates Hjc, the Holliday junction cleavage enzyme. The chain is DNA polymerase sliding clamp 1 from Sulfurisphaera tokodaii (strain DSM 16993 / JCM 10545 / NBRC 100140 / 7) (Sulfolobus tokodaii).